Reading from the N-terminus, the 204-residue chain is Holliday junction branch migration complex subunit RuvA (204 aa).

The domain I stretch occupies residues 1–64 (MFAFLRGELV…EDLQQLFGFL (64 aa)). The segment at 65–143 (DEEELQLFRL…KIQPTSSAKA (79 aa)) is domain II. The interval 144–151 (GAPSAVLS) is flexible linker. Residues 151–204 (SATQLIDDAVAALTTLGFPKASAQKAVSKVLETTPGLSVEELVRTSLAAMHNNL) are domain III.

This sequence belongs to the RuvA family. Homotetramer. Forms an RuvA(8)-RuvB(12)-Holliday junction (HJ) complex. HJ DNA is sandwiched between 2 RuvA tetramers; dsDNA enters through RuvA and exits via RuvB. An RuvB hexamer assembles on each DNA strand where it exits the tetramer. Each RuvB hexamer is contacted by two RuvA subunits (via domain III) on 2 adjacent RuvB subunits; this complex drives branch migration. In the full resolvosome a probable DNA-RuvA(4)-RuvB(12)-RuvC(2) complex forms which resolves the HJ.

The protein resides in the cytoplasm. The RuvA-RuvB-RuvC complex processes Holliday junction (HJ) DNA during genetic recombination and DNA repair, while the RuvA-RuvB complex plays an important role in the rescue of blocked DNA replication forks via replication fork reversal (RFR). RuvA specifically binds to HJ cruciform DNA, conferring on it an open structure. The RuvB hexamer acts as an ATP-dependent pump, pulling dsDNA into and through the RuvAB complex. HJ branch migration allows RuvC to scan DNA until it finds its consensus sequence, where it cleaves and resolves the cruciform DNA. The polypeptide is Holliday junction branch migration complex subunit RuvA (Chlorobaculum parvum (strain DSM 263 / NCIMB 8327) (Chlorobium vibrioforme subsp. thiosulfatophilum)).